The following is a 126-amino-acid chain: C-X-C motif chemokine 9 (126 aa).

An N-terminal signal peptide occupies residues 1 to 21 (MKSAVLFLLGIIFLEQCGVRG). Disulfide bonds link Cys30–Cys57 and Cys32–Cys73. Asn58 carries an N-linked (GlcNAc...) asparagine glycan. The segment at 91–126 (KISQKKKQKRGKKHQKNMKNRKPKTPQSRRRSRKTT) is disordered. The segment covering 93 to 126 (SQKKKQKRGKKHQKNMKNRKPKTPQSRRRSRKTT) has biased composition (basic residues).

The protein belongs to the intercrine alpha (chemokine CxC) family.

Its subcellular location is the secreted. In terms of biological role, may be a cytokine that affects the growth, movement, or activation state of cells that participate in immune and inflammatory response. The chain is C-X-C motif chemokine 9 (Cxcl9) from Mus musculus (Mouse).